Consider the following 628-residue polypeptide: Phosphomethylpyrimidine synthase (628 aa).

The segment at 1-22 (MSKQEKTINLSESAQVDQQSVQ) is disordered. The span at 7–22 (TINLSESAQVDQQSVQ) shows a compositional bias: polar residues. Residues N232, M261, Y290, H326, 346-348 (SRG), 387-390 (DGLR), and E426 each bind substrate. H430 contacts Zn(2+). Position 453 (Y453) interacts with substrate. Residue H494 participates in Zn(2+) binding. [4Fe-4S] cluster-binding residues include C574, C577, and C582.

This sequence belongs to the ThiC family. As to quaternary structure, homodimer. The cofactor is [4Fe-4S] cluster.

It carries out the reaction 5-amino-1-(5-phospho-beta-D-ribosyl)imidazole + S-adenosyl-L-methionine = 4-amino-2-methyl-5-(phosphooxymethyl)pyrimidine + CO + 5'-deoxyadenosine + formate + L-methionine + 3 H(+). It functions in the pathway cofactor biosynthesis; thiamine diphosphate biosynthesis. In terms of biological role, catalyzes the synthesis of the hydroxymethylpyrimidine phosphate (HMP-P) moiety of thiamine from aminoimidazole ribotide (AIR) in a radical S-adenosyl-L-methionine (SAM)-dependent reaction. The sequence is that of Phosphomethylpyrimidine synthase from Pseudomonas putida (strain W619).